Consider the following 2324-residue polypeptide: Myomegalin (2324 aa).

4 coiled-coil regions span residues 41 to 132, 158 to 205, 238 to 288, and 348 to 638; these read REDV…LVEA, QVKL…LLEE, DSHL…SLKE, and LFCS…NKQA. Disordered regions lie at residues 72–96 and 205–240; these read TWAD…EPQQ and EPGG…SDSH. The segment covering 85–96 has biased composition (basic and acidic residues); that stretch reads AELRRQVEEPQQ. Over residues 219–238 the composition is skewed to polar residues; it reads PTQQKPDLNETPTTQPSVSD. Positions 701-747 are disordered; it reads PAGATSVGPHHGEQTDQGSTQMPSRDDSTSLTAREEASIPRSTLGDS. Thr-705 is modified (phosphothreonine). The segment covering 724-738 has biased composition (basic and acidic residues); sequence SRDDSTSLTAREEAS. Coiled-coil stretches lie at residues 745–822, 855–923, and 1011–1043; these read GDSD…QLVD, ENRR…EEVL, and LRAE…GFSS. 2 disordered regions span residues 1155-1182 and 1195-1216; these read LPSS…SLKL and NKSQ…STKH. 3 coiled-coil regions span residues 1213–1241, 1346–1384, and 1430–1455; these read STKH…SEAT, TSDD…LSAT, and GLQA…PKTG. Disordered stretches follow at residues 1540 to 1559, 1589 to 1610, 1628 to 1685, 1742 to 1773, 1857 to 1877, and 2081 to 2140; these read TDRL…KEEA, RFSS…SSTS, YTHY…IPKP, APPT…SPAR, LSST…GLES, and NQQP…TPPK. The Olduvai domain occupies 1550–1641; the sequence is KDHKSEKEEA…EEKKPSPSNS (92 aa). 2 stretches are compositionally biased toward low complexity: residues 1591 to 1610 and 1637 to 1646; these read SSPP…SSTS and SPSNSAASAS. Residues 1743–1767 show a composition bias toward polar residues; it reads PPTSTSTLLSNHTEASSPRYSNPAQ. The stretch at 1821–2056 forms a coiled coil; sequence GADLLEEHLG…LRLQLEQQMD (236 aa). Polar residues-rich tracts occupy residues 2081–2090 and 2108–2135; these read NQQPPFQGSA and PSNS…SAAT. A coiled-coil region spans residues 2248–2274; the sequence is EEGNLMEKELLDLRAQVSQQQQLLQST.

Interacts with PDE4D. May interact with MAPRE1 and MAPRE3. May form a pericentrosomal complex with AKAP9, CDK5RAP2 and EB1/MAPRE1 in an isoform-specific manner; within this complex, may mediate MAPRE1-binding to CDK5RAP2. Interaction with AKAP9 stabilizes both proteins. May interact with CAMSAP2 in an isoform-specific manner; this interaction is much stronger in the presence of AKAP9. In complex with AKAP9, recruits CAMSAP2 to the Golgi apparatus. May interact with unglycosylated LGALS3BP in an isoform-specific manner; this interaction may connect the pericentrosomal complex to the gamma-tubulin ring complex (gamma-TuRC) to promote microtubule assembly and acetylation. As to expression, abundantly expressed in heart and skeletal muscle and to a lower extent in brain, lung and liver. Expressed in heart, skeletal muscle and testis (at protein level).

Its subcellular location is the cytoplasm. The protein localises to the cytoskeleton. It is found in the microtubule organizing center. It localises to the centrosome. The protein resides in the golgi apparatus. Functionally, functions as an anchor sequestering components of the cAMP-dependent pathway to Golgi and/or centrosomes. May participate in microtubule dynamics, promoting microtubule assembly, in an isoform-specific manner. Depending upon the cell context, may act at the level of the Golgi apparatus or that of the centrosome. In complex with AKAP9, recruits CAMSAP2 to the Golgi apparatus and tethers non-centrosomal minus-end microtubules to the Golgi, an important step for polarized cell movement. In complex with AKAP9, EB1/MAPRE1 and CDK5RAP2, contributes to microtubules nucleation and extension from the centrosome to the cell periphery, a crucial process for directed cell migration, mitotic spindle orientation and cell-cycle progression. The chain is Myomegalin (Pde4dip) from Rattus norvegicus (Rat).